Here is a 144-residue protein sequence, read N- to C-terminus: Large ribosomal subunit protein uL16 (144 aa).

This sequence belongs to the universal ribosomal protein uL16 family. As to quaternary structure, part of the 50S ribosomal subunit.

Functionally, binds 23S rRNA and is also seen to make contacts with the A and possibly P site tRNAs. The protein is Large ribosomal subunit protein uL16 of Clostridium perfringens (strain ATCC 13124 / DSM 756 / JCM 1290 / NCIMB 6125 / NCTC 8237 / Type A).